Consider the following 186-residue polypeptide: uncharacterized protein (186 aa).

Disordered stretches follow at residues 17–47 (LSGE…EETF), 77–105 (EDKL…AAEA), and 121–164 (QQAA…PVAG). The span at 90–105 (PLAARPPSQAAAAAEA) shows a compositional bias: low complexity. Positions 136 to 149 (PEPDPEPADEAAEE) are enriched in acidic residues.

This is an uncharacterized protein from Homo sapiens (Human).